A 61-amino-acid polypeptide reads, in one-letter code: Small ribosomal subunit protein uS14 (61 aa).

Zn(2+) is bound by residues cysteine 24, cysteine 27, cysteine 40, and cysteine 43.

The protein belongs to the universal ribosomal protein uS14 family. Zinc-binding uS14 subfamily. Part of the 30S ribosomal subunit. Contacts proteins S3 and S10. It depends on Zn(2+) as a cofactor.

Functionally, binds 16S rRNA, required for the assembly of 30S particles and may also be responsible for determining the conformation of the 16S rRNA at the A site. The protein is Small ribosomal subunit protein uS14 of Campylobacter lari (strain RM2100 / D67 / ATCC BAA-1060).